We begin with the raw amino-acid sequence, 342 residues long: Nicotinate-nucleotide--dimethylbenzimidazole phosphoribosyltransferase (342 aa).

The active-site Proton acceptor is the Glu-311.

Belongs to the CobT family.

It catalyses the reaction 5,6-dimethylbenzimidazole + nicotinate beta-D-ribonucleotide = alpha-ribazole 5'-phosphate + nicotinate + H(+). The protein operates within nucleoside biosynthesis; alpha-ribazole biosynthesis; alpha-ribazole from 5,6-dimethylbenzimidazole: step 1/2. Catalyzes the synthesis of alpha-ribazole-5'-phosphate from nicotinate mononucleotide (NAMN) and 5,6-dimethylbenzimidazole (DMB). This Shewanella loihica (strain ATCC BAA-1088 / PV-4) protein is Nicotinate-nucleotide--dimethylbenzimidazole phosphoribosyltransferase.